A 164-amino-acid chain; its full sequence is Probable Brix domain-containing ribosomal biogenesis protein (164 aa).

In terms of domain architecture, Brix spans 1–164; it reads MIITTSRKPS…IKTVKILDIE (164 aa).

Probably involved in the biogenesis of the ribosome. This is Probable Brix domain-containing ribosomal biogenesis protein from Methanococcus maripaludis (strain DSM 14266 / JCM 13030 / NBRC 101832 / S2 / LL).